A 219-amino-acid chain; its full sequence is 2-hydroxy-3-keto-5-methylthiopentenyl-1-phosphate phosphatase (219 aa).

It belongs to the HAD-like hydrolase superfamily. MtnX family.

The catalysed reaction is 2-hydroxy-5-methylsulfanyl-3-oxopent-1-enyl phosphate + H2O = 1,2-dihydroxy-5-(methylsulfanyl)pent-1-en-3-one + phosphate. Its pathway is amino-acid biosynthesis; L-methionine biosynthesis via salvage pathway; L-methionine from S-methyl-5-thio-alpha-D-ribose 1-phosphate: step 4/6. Functionally, dephosphorylates 2-hydroxy-3-keto-5-methylthiopentenyl-1-phosphate (HK-MTPenyl-1-P) yielding 1,2-dihydroxy-3-keto-5-methylthiopentene (DHK-MTPene). This Bacillus cytotoxicus (strain DSM 22905 / CIP 110041 / 391-98 / NVH 391-98) protein is 2-hydroxy-3-keto-5-methylthiopentenyl-1-phosphate phosphatase.